The chain runs to 98 residues: Co-chaperonin GroES (98 aa).

It belongs to the GroES chaperonin family. In terms of assembly, heptamer of 7 subunits arranged in a ring. Interacts with the chaperonin GroEL.

It localises to the cytoplasm. Together with the chaperonin GroEL, plays an essential role in assisting protein folding. The GroEL-GroES system forms a nano-cage that allows encapsulation of the non-native substrate proteins and provides a physical environment optimized to promote and accelerate protein folding. GroES binds to the apical surface of the GroEL ring, thereby capping the opening of the GroEL channel. In Bartonella bacilliformis (strain ATCC 35685 / KC583 / Herrer 020/F12,63), this protein is Co-chaperonin GroES.